Reading from the N-terminus, the 813-residue chain is Kinesin-like protein KIN-8B (813 aa).

One can recognise a Kinesin motor domain in the interval 14-345; sequence TLTVAVKCRP…LKYADRAKEI (332 aa). 104-111 contacts ATP; it reads GSTGSGKT. A coiled-coil region spans residues 349–391; that stretch reads IQKNIGTIDTHMSDYQRMIDNLQSEVSQLKTQLAEKESQLSIK. 2 disordered regions span residues 664 to 694 and 756 to 813; these read GSRP…PRMA and AVST…RQHQ. Composition is skewed to polar residues over residues 682–694, 761–791, and 804–813; these read YPQT…PRMA, GARN…NSHT, and KGNNTQRQHQ.

Belongs to the TRAFAC class myosin-kinesin ATPase superfamily. Kinesin family. KIN-8 subfamily.

This Arabidopsis thaliana (Mouse-ear cress) protein is Kinesin-like protein KIN-8B.